Reading from the N-terminus, the 249-residue chain is MAPRPKAPPQPAEPDPALPRPRGRPPKAGAVTAGWVGLDFTRERALYADGRAPVAGADEVGRGPLAGPVVAAAVVLDPARVPQGLDDSKKLTRAKRESLYLEICATAEVAIALAPPERIDRDNIRQATLWALANAVRGLPCRPAFLLVDGNDPPRVDCEVEAIVGGDGLVASIAAASIVAKVVRDRLMAGVGAAFPAYGFERHMGYGTREHGAALKAHGPCLHHRRSFAPVREQQLGLFPAPGELEEAD.

A compositionally biased stretch (pro residues) spans 1–19 (MAPRPKAPPQPAEPDPALP). Residues 1-31 (MAPRPKAPPQPAEPDPALPRPRGRPPKAGAV) form a disordered region. An RNase H type-2 domain is found at 52 to 240 (APVAGADEVG…VREQQLGLFP (189 aa)). A divalent metal cation contacts are provided by Asp-58, Glu-59, and Asp-149.

It belongs to the RNase HII family. The cofactor is Mn(2+). Requires Mg(2+) as cofactor.

The protein localises to the cytoplasm. The enzyme catalyses Endonucleolytic cleavage to 5'-phosphomonoester.. Endonuclease that specifically degrades the RNA of RNA-DNA hybrids. The sequence is that of Ribonuclease HII from Xanthobacter autotrophicus (strain ATCC BAA-1158 / Py2).